We begin with the raw amino-acid sequence, 140 residues long: Nucleoside diphosphate kinase (140 aa).

Residues Lys11, Phe59, Arg87, Thr93, Arg104, and Asn114 each coordinate ATP. Catalysis depends on His117, which acts as the Pros-phosphohistidine intermediate.

Belongs to the NDK family. As to quaternary structure, homotetramer. Mg(2+) is required as a cofactor.

It localises to the cytoplasm. It catalyses the reaction a 2'-deoxyribonucleoside 5'-diphosphate + ATP = a 2'-deoxyribonucleoside 5'-triphosphate + ADP. The enzyme catalyses a ribonucleoside 5'-diphosphate + ATP = a ribonucleoside 5'-triphosphate + ADP. Major role in the synthesis of nucleoside triphosphates other than ATP. The ATP gamma phosphate is transferred to the NDP beta phosphate via a ping-pong mechanism, using a phosphorylated active-site intermediate. The sequence is that of Nucleoside diphosphate kinase from Methylobacterium radiotolerans (strain ATCC 27329 / DSM 1819 / JCM 2831 / NBRC 15690 / NCIMB 10815 / 0-1).